A 244-amino-acid chain; its full sequence is tRNA (guanine-N(1)-)-methyltransferase (244 aa).

Residues G113 and 133–138 (IGDFVL) contribute to the S-adenosyl-L-methionine site.

The protein belongs to the RNA methyltransferase TrmD family. As to quaternary structure, homodimer.

It localises to the cytoplasm. The catalysed reaction is guanosine(37) in tRNA + S-adenosyl-L-methionine = N(1)-methylguanosine(37) in tRNA + S-adenosyl-L-homocysteine + H(+). In terms of biological role, specifically methylates guanosine-37 in various tRNAs. The polypeptide is tRNA (guanine-N(1)-)-methyltransferase (Bacillus pumilus (strain SAFR-032)).